The following is a 404-amino-acid chain: Protein ARK2N (404 aa).

Composition is skewed to basic and acidic residues over residues Met-1–Glu-12 and Ser-23–Asp-32. 2 disordered regions span residues Met-1–Thr-50 and Arg-63–Asp-255. Ser-66 is subject to Phosphoserine. Ser-67 is subject to Phosphoserine; by AMPK. Over residues Ser-87–Glu-121 the composition is skewed to polar residues. Ser-143, Ser-145, and Ser-147 each carry phosphoserine. The span at Ala-169–Arg-187 shows a compositional bias: basic residues. Residues Arg-175–Leu-200 adopt a coiled-coil conformation. Residues Gln-202–Val-226 form a required for interaction with CSNK2B region. The span at Asp-203–Ser-219 shows a compositional bias: low complexity. 3 positions are modified to phosphoserine: Ser-327, Ser-328, and Ser-330. Residue Arg-347 is modified to Omega-N-methylarginine. Lys-358 participates in a covalent cross-link: Glycyl lysine isopeptide (Lys-Gly) (interchain with G-Cter in SUMO2).

In terms of assembly, interacts with CSNK2B (via KSSR). Interacts with JUN; the interaction is mediated by CSNK2B. Post-translationally, phosphorylated at Ser-67 by AMPK. In skeletal muscle, phosphorylation is induced by exercise and seems to increase muscle contractile function. As to expression, expressed in skeletal muscle.

The protein localises to the nucleus. In terms of biological role, AMPK substrate important for exercise capacity and skeletal muscle function. Required for normal contraction-induced signaling. Functionally, (Microbial infection) Upon Epstein-Barr virus (EBV) infection, suppresses viral BZLF1 expression and subsequent EBV reactivation by interacting with JUN and inhibiting its transcriptional activator activity on BZLF1 Z promoter. This is Protein ARK2N from Homo sapiens (Human).